We begin with the raw amino-acid sequence, 505 residues long: 2,3-bisphosphoglycerate-independent phosphoglycerate mutase (505 aa).

Residues D13 and S63 each contribute to the Mn(2+) site. The active-site Phosphoserine intermediate is S63. Residues H124, 153 to 154, R183, R189, 254 to 257, and K330 each bind substrate; these read RD and RADR. Mn(2+) contacts are provided by D396, H400, D437, H438, and H456.

It belongs to the BPG-independent phosphoglycerate mutase family. As to quaternary structure, monomer. The cofactor is Mn(2+).

The enzyme catalyses (2R)-2-phosphoglycerate = (2R)-3-phosphoglycerate. It functions in the pathway carbohydrate degradation; glycolysis; pyruvate from D-glyceraldehyde 3-phosphate: step 3/5. In terms of biological role, catalyzes the interconversion of 2-phosphoglycerate and 3-phosphoglycerate. In Ruegeria pomeroyi (strain ATCC 700808 / DSM 15171 / DSS-3) (Silicibacter pomeroyi), this protein is 2,3-bisphosphoglycerate-independent phosphoglycerate mutase.